The primary structure comprises 429 residues: Adenylosuccinate synthetase (429 aa).

GTP contacts are provided by residues 12-18 (GDEGKGK) and 40-42 (GHT). Asp-13 serves as the catalytic Proton acceptor. Residues Asp-13 and Gly-40 each contribute to the Mg(2+) site. IMP-binding positions include 13-16 (DEGK), 38-41 (NAGH), Thr-129, Arg-143, Gln-223, Thr-238, and Arg-302. His-41 acts as the Proton donor in catalysis. Residue 298 to 304 (TVTGRRR) participates in substrate binding. Residues Arg-304, 330 to 332 (KLD), and 412 to 414 (STS) contribute to the GTP site.

The protein belongs to the adenylosuccinate synthetase family. In terms of assembly, homodimer. The cofactor is Mg(2+).

It localises to the cytoplasm. The enzyme catalyses IMP + L-aspartate + GTP = N(6)-(1,2-dicarboxyethyl)-AMP + GDP + phosphate + 2 H(+). The protein operates within purine metabolism; AMP biosynthesis via de novo pathway; AMP from IMP: step 1/2. In terms of biological role, plays an important role in the de novo pathway of purine nucleotide biosynthesis. Catalyzes the first committed step in the biosynthesis of AMP from IMP. This is Adenylosuccinate synthetase from Granulibacter bethesdensis (strain ATCC BAA-1260 / CGDNIH1).